We begin with the raw amino-acid sequence, 516 residues long: Coiled-coil domain-containing protein 149 (516 aa).

Over residues 1-18 the composition is skewed to basic and acidic residues; sequence MANQLRERHQSLKKKYGE. The segment at 1–29 is disordered; sequence MANQLRERHQSLKKKYGELIDGDPSVPPE. Coiled coils occupy residues 1 to 195 and 259 to 286; these read MANQ…ALEK and IQHQRQTNKILGNRVAELEKKLRTLEVS. Basic and acidic residues predominate over residues 321–332; the sequence is PHHKPLTNEEHG. Disordered regions lie at residues 321–350 and 406–452; these read PHHKPLTNEEHGQPGVELGSPALDEGSDNE and ETSF…SLGD. The span at 414 to 436 shows a compositional bias: polar residues; the sequence is DSQSTASSQENHDNLQSPFSSPE.

The protein belongs to the CCDC149 family.

The polypeptide is Coiled-coil domain-containing protein 149 (ccdc149) (Xenopus laevis (African clawed frog)).